Reading from the N-terminus, the 408-residue chain is DNA primase DnaG (408 aa).

The region spanning Asp-172–Pro-248 is the Toprim domain. Positions 178, 222, and 224 each coordinate Mg(2+). The disordered stretch occupies residues Ala-279–Glu-304.

The protein belongs to the archaeal DnaG primase family. Forms a ternary complex with MCM helicase and DNA. Component of the archaeal exosome complex. Mg(2+) serves as cofactor.

It catalyses the reaction ssDNA + n NTP = ssDNA/pppN(pN)n-1 hybrid + (n-1) diphosphate.. Functionally, RNA polymerase that catalyzes the synthesis of short RNA molecules used as primers for DNA polymerase during DNA replication. Also part of the exosome, which is a complex involved in RNA degradation. Acts as a poly(A)-binding protein that enhances the interaction between heteromeric, adenine-rich transcripts and the exosome. This is DNA primase DnaG from Pyrobaculum aerophilum (strain ATCC 51768 / DSM 7523 / JCM 9630 / CIP 104966 / NBRC 100827 / IM2).